Consider the following 193-residue polypeptide: Ferredoxin-2, mitochondrial (193 aa).

The segment at 38–70 (QATPEKLETSNEEEGSSSAQITAGVESDAENQR) is disordered. A 2Fe-2S ferredoxin-type domain is found at 78 to 180 (VEVVFLDRSG…GAEFTLPKIT (103 aa)). 4 residues coordinate [2Fe-2S] cluster: Cys115, Cys121, Cys124, and Cys161.

Belongs to the adrenodoxin/putidaredoxin family. In terms of assembly, component of the mitochondrial core iron-sulfur cluster (ISC) complex composed of NFS1, LYRM4, NDUFAB1, ISCU, FXN, and FDX2; this complex is a heterohexamer containing two copies of each monomer. [2Fe-2S] cluster is required as a cofactor.

Its subcellular location is the mitochondrion. The protein localises to the mitochondrion matrix. Electron donor, of the core iron-sulfur cluster (ISC) assembly complex, that acts to reduce the persulfide into sulfide during [2Fe-2S] clusters assembly on the scaffolding protein ISCU. The core iron-sulfur cluster (ISC) assembly complex is involved in the de novo synthesis of a [2Fe-2S] cluster, the first step of the mitochondrial iron-sulfur protein biogenesis. This process is initiated by the cysteine desulfurase complex (NFS1:LYRM4:NDUFAB1) that produces persulfide which is delivered on the scaffold protein ISCU in a FXN-dependent manner. Then this complex is stabilized by FDX2 which provides reducing equivalents to accomplish the [2Fe-2S] cluster assembly. Finally, the [2Fe-2S] cluster is transferred from ISCU to chaperone proteins, including HSCB, HSPA9 and GLRX5. Essential for coenzyme Q biosynthesis: together with FDXR, transfers the electrons required for the hydroxylation reaction performed by COQ6. The sequence is that of Ferredoxin-2, mitochondrial from Xenopus laevis (African clawed frog).